The following is a 494-amino-acid chain: AAA-ATPase At2g18190 (494 aa).

The helical transmembrane segment at S13–F29 threads the bilayer. G251–S258 contacts ATP. A compositionally biased stretch (basic and acidic residues) spans T459–N470. The interval T459–N494 is disordered. Residues K479–N494 are compositionally biased toward basic residues.

It belongs to the AAA ATPase family. BCS1 subfamily. Mg(2+) serves as cofactor.

Its subcellular location is the membrane. The enzyme catalyses ATP + H2O = ADP + phosphate + H(+). The sequence is that of AAA-ATPase At2g18190 from Arabidopsis thaliana (Mouse-ear cress).